The sequence spans 605 residues: Hepatocyte nuclear factor 1-alpha-A (605 aa).

Positions M1 to A31 are dimerization. Residues M1–D32 form the HNF-p1 domain. The disordered stretch occupies residues Q57–P81. Residues K85–F180 form the POU-specific atypical domain. Interaction with DNA stretches follow at residues Q128–E130, H141–N147, K153–K156, R206–W209, R266–Y268, and N273–K276. A Nuclear localization signal motif is present at residues K200 to K208. A DNA-binding region (homeobox; HNF1-type) is located at residues M202 to H282. Residues D321–P335 show a composition bias toward polar residues. The interval D321 to S343 is disordered. A not present in other members of the HNF1 family region spans residues P448–H453.

It belongs to the HNF1 homeobox family. In terms of assembly, binds DNA as dimer. Forms a homodimer or heterodimer with HNF1-alpha-B. Potentially also form a heterodimer with HNF1-beta. In terms of tissue distribution, protein expressed in liver, stomach, small intestine, colon and kidney. Not expressed in spleen, lung, blood, heart muscle, skeletal muscle, testis and brain.

It localises to the nucleus. Functionally, transcriptional activator that regulates the tissue specific expression of multiple genes, especially in pancreas and liver. Binds to the hepatocyte specific promoter element HP1. Binds to the inverted palindrome 5'-GTTAATNATTAAC-3'. This is Hepatocyte nuclear factor 1-alpha-A (hnf1a-a) from Xenopus laevis (African clawed frog).